The sequence spans 158 residues: Endoribonuclease YbeY (158 aa).

The Zn(2+) site is built by His-119, His-123, and Asp-129.

This sequence belongs to the endoribonuclease YbeY family. Zn(2+) serves as cofactor.

The protein localises to the cytoplasm. In terms of biological role, single strand-specific metallo-endoribonuclease involved in late-stage 70S ribosome quality control and in maturation of the 3' terminus of the 16S rRNA. The sequence is that of Endoribonuclease YbeY from Chlamydia felis (strain Fe/C-56) (Chlamydophila felis).